The following is a 596-amino-acid chain: Cell adhesion molecule CEACAM20 (596 aa).

The signal sequence occupies residues 1 to 30 (MGPADSWGHHWMGILLSASLCTVWSPPAAA). At 31–450 (QLTLNANPLD…SSLSSGAIAG (420 aa)) the chain is on the extracellular side. Ig-like C2-type domains lie at 58–154 (PQIH…PIFL), 160–246 (PDPV…GTLK), 256–341 (PQVV…LELT), and 346–432 (PDQV…TSVL). An intrachain disulfide couples Cys-90 to Cys-138. Residues Asn-96 and Asn-105 are each glycosylated (N-linked (GlcNAc...) asparagine). A disulfide bridge links Cys-276 with Cys-324. Asn-280, Asn-306, Asn-317, Asn-368, and Asn-415 each carry an N-linked (GlcNAc...) asparagine glycan. A disulfide bond links Cys-375 and Cys-416. The helical transmembrane segment at 451 to 471 (IVIGILAVIAVASELGYFLCI) threads the bilayer. Residues 472–585 (RNARRPSRKT…SIYEELVNPE (114 aa)) lie on the Cytoplasmic side of the membrane. 2 disordered regions span residues 477–510 (PSRKTTEDPSHETSQPIPKEEHPTEPSSESLSPE) and 527–563 (QPPDLPEETYETKLPSASRRGNSFSPWKPPPKPLMPP). Residues 501 to 510 (EPSSESLSPE) show a composition bias toward low complexity. Positions 553–562 (WKPPPKPLMP) are enriched in pro residues. 2 positions are modified to phosphotyrosine: Tyr-578 and Tyr-589.

Belongs to the immunoglobulin superfamily. CEA family. In terms of assembly, interacts (via extracellular domain) with PTPRH (via extracellular domain); the interaction dephosphorylates CEACAM20. Interacts (phosphorylated form) with SYK (via SH2 domains); the interaction further enhances CEACAM20 phosphorylation. Phosphorylated on tyrosine residues by SYK, SRC and FYN in vitro.

It is found in the cell projection. The protein resides in the microvillus membrane. It localises to the apical cell membrane. Functionally, together with the tyrosine-protein kinase SYK, enhances production of the cytokine CXCL8/IL-8 via the NFKB pathway and may thus have a role in the intestinal immune response. The sequence is that of Cell adhesion molecule CEACAM20 from Homo sapiens (Human).